The following is a 302-amino-acid chain: Sulfate adenylyltransferase subunit 2 (302 aa).

Residues 280–302 are disordered; the sequence is RQGRLIDSDQSASMEQKKRQGYF.

It belongs to the PAPS reductase family. CysD subfamily. In terms of assembly, heterodimer composed of CysD, the smaller subunit, and CysN.

The catalysed reaction is sulfate + ATP + H(+) = adenosine 5'-phosphosulfate + diphosphate. It functions in the pathway sulfur metabolism; hydrogen sulfide biosynthesis; sulfite from sulfate: step 1/3. Its function is as follows. With CysN forms the ATP sulfurylase (ATPS) that catalyzes the adenylation of sulfate producing adenosine 5'-phosphosulfate (APS) and diphosphate, the first enzymatic step in sulfur assimilation pathway. APS synthesis involves the formation of a high-energy phosphoric-sulfuric acid anhydride bond driven by GTP hydrolysis by CysN coupled to ATP hydrolysis by CysD. The chain is Sulfate adenylyltransferase subunit 2 from Shewanella baltica (strain OS223).